A 257-amino-acid chain; its full sequence is Putative hydro-lyase Bcep18194_B2576 (257 aa).

Belongs to the D-glutamate cyclase family.

This Burkholderia lata (strain ATCC 17760 / DSM 23089 / LMG 22485 / NCIMB 9086 / R18194 / 383) protein is Putative hydro-lyase Bcep18194_B2576.